Here is a 313-residue protein sequence, read N- to C-terminus: Uracil-DNA glycosylase (313 aa).

Residues 1–12 (MIGQKTLYSFFS) are compositionally biased toward polar residues. Positions 1-25 (MIGQKTLYSFFSPSPARKRHAPSPE) are interaction with FAM72A. Residues 1–29 (MIGQKTLYSFFSPSPARKRHAPSPEPAVQ) form a mitochondrial localization signal region. The disordered stretch occupies residues 1–68 (MIGQKTLYSF…GTPPSSPLSA (68 aa)). Phosphoserine is present on residues serine 12 and serine 14. Positions 17 to 19 (RKR) match the Important for nuclear sorting motif. Serine 23 is modified (phosphoserine). Residues 43 to 53 (AAAIPAKKAPA) show a composition bias toward low complexity. Residue threonine 60 is modified to Phosphothreonine. At serine 64 the chain carries Phosphoserine. Positions 73 to 88 (RIQRNKAAALLRLAAR) are interaction with RPA2. Position 153 (glutamine 153) interacts with uracil. The Proton acceptor role is filled by aspartate 154. Histidine 157 lines the dsDNA pocket. Uracil is bound at residue phenylalanine 167. Residue serine 178 coordinates dsDNA. Residue asparagine 213 coordinates uracil. Residues serine 256, histidine 277, serine 279, serine 282, and arginine 285 each contribute to the dsDNA site. Histidine 277 is a binding site for uracil. Position 295 is an N6-acetyllysine (lysine 295).

The protein belongs to the uracil-DNA glycosylase (UDG) superfamily. UNG family. In terms of assembly, monomer. As to quaternary structure, interacts with RPA2 subunit of the RPA trimer; this interaction mediates UNG2 recruitment to RPA-coated single-stranded DNA at stalled replication forks. Interacts with PCNA; this interaction mediates UNG2 recruitment to S-phase replication foci. Interacts (via N-terminus) with FAM72A. (Microbial infection) Interacts with HIV-1 Vpr. Processed by mitochondrial serine or cysteine peptidases to yield a mature dominant form that lacks N-terminal 29 amino acid residues and another minor form that lacks N-terminal 77 amino acid residues. The catalytic activity of UNG1 delta29 is not product-inhibited by AP sites.

Its subcellular location is the mitochondrion. It localises to the nucleus. The catalysed reaction is Hydrolyzes single-stranded DNA or mismatched double-stranded DNA and polynucleotides, releasing free uracil.. It catalyses the reaction a 2'-deoxyuridine in single-stranded DNA + H2O = a 2'-deoxyribose 5'-monophosphate in single-stranded DNA + uracil. It carries out the reaction a 2'-deoxyuridine in double-stranded DNA + H2O = a 2'-deoxyribose 5'-monophosphate in double-stranded DNA + uracil. Functionally, uracil-DNA glycosylase that hydrolyzes the N-glycosidic bond between uracil and deoxyribose in single- and double-stranded DNA (ssDNA and dsDNA) to release a free uracil residue and form an abasic (apurinic/apyrimidinic; AP) site. Excises uracil residues arising as a result of misincorporation of dUMP residues by DNA polymerase during replication or due to spontaneous or enzymatic deamination of cytosine. Mediates error-free base excision repair (BER) of uracil at replication forks. According to the model, it is recruited by PCNA to S-phase replication forks to remove misincorporated uracil at U:A base mispairs in nascent DNA strands. Via trimeric RPA it is recruited to ssDNA stretches ahead of the polymerase to allow detection and excision of deaminated cytosines prior to replication. The resultant AP sites temporarily stall replication, allowing time to repair the lesion. Mediates mutagenic uracil processing involved in antibody affinity maturation. Processes AICDA-induced U:G base mispairs at variable immunoglobulin (Ig) regions leading to the generation of transversion mutations. Operates at switch sites of Ig constant regions where it mediates Ig isotype class switch recombination. Excises AICDA-induced uracil residues forming AP sites that are subsequently nicked by APEX1 endonuclease. The accumulation of staggered nicks in opposite strands results in double strand DNA breaks that are finally resolved via non-homologous end joining repair pathway. The sequence is that of Uracil-DNA glycosylase from Homo sapiens (Human).